We begin with the raw amino-acid sequence, 1107 residues long: Polyphosphatidylinositol phosphatase INP53 (1107 aa).

Residues 142–482 form the SAC domain; it reads LKKLLSNGSF…GDQISQIYTG (341 aa). At serine 497 the chain carries Phosphoserine. The interval 926-1107 is disordered; the sequence is TASSVASSSP…LDSWQPLTPK (182 aa). Residues 927–942 show a composition bias toward low complexity; that stretch reads ASSVASSSPVSSASAS. Residues 943–956 show a composition bias toward polar residues; it reads LQPVRTQNSSQSRT. Serine 986 carries the phosphoserine modification. 4 stretches are compositionally biased toward polar residues: residues 987 to 1005, 1020 to 1038, 1045 to 1063, and 1097 to 1107; these read PTPQ…NIQE, FSQN…SPMS, NSAS…QTPT, and TLDSWQPLTPK. Position 1035 is a phosphoserine (serine 1035). Residue threonine 1105 is modified to Phosphothreonine.

Belongs to the synaptojanin family. It in the central section; belongs to the inositol 1,4,5-trisphosphate 5-phosphatase family. As to quaternary structure, interacts (via SAC domain) with BSP1; the interaction is direct. Interacts with CHC1.

The protein localises to the cytoplasm. It carries out the reaction a 1,2-diacyl-sn-glycero-3-phospho-(1D-myo-inositol-4,5-bisphosphate) + H2O = a 1,2-diacyl-sn-glycero-3-phospho-(1D-myo-inositol 4-phosphate) + phosphate. Functionally, dephosphorylates a number of phosphatidylinositols (PIs) like phosphatidylinositol 4,5-bisphosphate (PtdIns(4,5)P2), but also phosphatidylinositol 3-phosphate (PtdIns(3)P), phosphatidylinositol 4-phosphate (PtdIns(4)P), and phosphatidylinositol 3,5-bisphosphate (PtdIns(3,5)P2). Controls the cellular levels and subcellular distribution of phosphatidylinositol 3-phosphate and phosphatidylinositol 4,5-bisphosphate. Plays an essential role in a TGN (trans Golgi network)-to-early endosome pathway. Involved in clathrin-mediated protein sorting at the TGN. This Saccharomyces cerevisiae (strain ATCC 204508 / S288c) (Baker's yeast) protein is Polyphosphatidylinositol phosphatase INP53 (INP53).